A 280-amino-acid chain; its full sequence is Pantothenate synthetase (280 aa).

32–39 (MGALHAGH) contacts ATP. His39 functions as the Proton donor in the catalytic mechanism. A (R)-pantoate-binding site is contributed by Gln63. Gln63 lines the beta-alanine pocket. 149 to 152 (GEKD) is an ATP binding site. Residue Gln155 participates in (R)-pantoate binding. Residues Val178 and 186-189 (MSSR) each bind ATP.

It belongs to the pantothenate synthetase family. Homodimer.

It localises to the cytoplasm. It carries out the reaction (R)-pantoate + beta-alanine + ATP = (R)-pantothenate + AMP + diphosphate + H(+). The protein operates within cofactor biosynthesis; (R)-pantothenate biosynthesis; (R)-pantothenate from (R)-pantoate and beta-alanine: step 1/1. Catalyzes the condensation of pantoate with beta-alanine in an ATP-dependent reaction via a pantoyl-adenylate intermediate. This Ruegeria sp. (strain TM1040) (Silicibacter sp.) protein is Pantothenate synthetase.